The chain runs to 106 residues: uncharacterized protein (106 aa).

A signal peptide spans 1–31 (MKKKTKIILSLLAALIVILIVLPVLSPVVFT).

This is an uncharacterized protein from Bacillus subtilis (strain 168).